The following is a 433-amino-acid chain: Ornithine decarboxylase, chloroplastic (433 aa).

The residue at position 96 (lysine 96) is an N6-(pyridoxal phosphate)lysine. Pyridoxal 5'-phosphate is bound by residues serine 228, glycine 266, and 299-302; that span reads EPGR. A substrate-binding site is contributed by 342–343; it reads YD. Cysteine 378 functions as the Proton donor; shared with dimeric partner in the catalytic mechanism. Aspartate 379 contacts substrate. Tyrosine 407 is a pyridoxal 5'-phosphate binding site.

The protein belongs to the Orn/Lys/Arg decarboxylase class-II family. In terms of assembly, homodimer. Only the dimer is catalytically active, as the active sites are constructed of residues from both monomers. Requires pyridoxal 5'-phosphate as cofactor.

It is found in the plastid. The protein resides in the chloroplast. It carries out the reaction L-ornithine + H(+) = putrescine + CO2. It participates in alkaloid biosynthesis; nicotine biosynthesis. The protein operates within amine and polyamine biosynthesis; putrescine biosynthesis via L-ornithine pathway; putrescine from L-ornithine: step 1/1. Its function is as follows. Involved in the biosynthesis of pyridine alkaloid natural products, leading mainly to the production of anabasine, anatabine, nicotine and nornicotine, effective deterrents against herbivores with antiparasitic and pesticide properties (neurotoxins); nornicotine serves as the precursor in the synthesis of the carcinogen compound N'-nitrosonornicotine (NNN). Catalyzes the first and rate-limiting step of polyamine biosynthesis that converts ornithine into putrescine, which is the precursor for the polyamines, spermidine and spermine. Polyamines are essential for cell proliferation and are implicated in cellular processes, ranging from DNA replication to apoptosis. The sequence is that of Ornithine decarboxylase, chloroplastic from Nicotiana glauca (Glaucous tobacco).